The primary structure comprises 663 residues: MNFRYNHTPFGYKRRQTREVKVGDVKIGGNNPIVIQSMINSDTTDTKGTVKQILELERTGCEIVRFTVPSQVDADNLPSIRQELKKAGSKIPLVADIHFTPSVAMKAVEYVEKVRINPGNFADKKKFAVRDYTDSEYDEELERISATFSPLVLRCKELGVSMRIGTNHGSLSDRIMNRYGDTPQGMVESALEFIRIAESLNYYDIVVSMKASNPQVMVQAYRMLASRFNELKMDYPLHLGVTEAGDGKDGRIKSAIGIGSLLEDGLGDTIRVSLTEDPVLEIPVARLLAEKFNKRIVKPEPVRGYSEFRNPFTYERFYSSEIKVGTFEAGENHPVRVETVLPFENSNSFLANIAKLYQYGKSFSIEPESILIDSPSPDQLKEISEAAAALSIPVGILLGKNVSLNEKLQNELRGFPKVVFDPFLQFQDGKKMLSFLQERQNAGLYTEIHTSGAKIESFKGLPETLSEIGIKNVLFSIESKEILYDYRKLGSILSQHEFPILLHGSFSNPEEALYDSAIGIGGLLIDGIGDLIRIKTPKMKDIEEIFQLSYDLLQGTRLRLTKTEYISCPSCGRTLFNLQETTARIKSRTGHLKGVKIAVMGCIVNGPGEMADADFGYVGAGPGKVHLYRGKEIVMKNVPSEVADEKLVELIKKHGLWQDVTNV.

The [4Fe-4S] cluster site is built by Cys-568, Cys-571, Cys-602, and Glu-609.

It belongs to the IspG family. [4Fe-4S] cluster serves as cofactor.

The enzyme catalyses (2E)-4-hydroxy-3-methylbut-2-enyl diphosphate + oxidized [flavodoxin] + H2O + 2 H(+) = 2-C-methyl-D-erythritol 2,4-cyclic diphosphate + reduced [flavodoxin]. It functions in the pathway isoprenoid biosynthesis; isopentenyl diphosphate biosynthesis via DXP pathway; isopentenyl diphosphate from 1-deoxy-D-xylulose 5-phosphate: step 5/6. In terms of biological role, converts 2C-methyl-D-erythritol 2,4-cyclodiphosphate (ME-2,4cPP) into 1-hydroxy-2-methyl-2-(E)-butenyl 4-diphosphate. This chain is 4-hydroxy-3-methylbut-2-en-1-yl diphosphate synthase (flavodoxin), found in Leptospira borgpetersenii serovar Hardjo-bovis (strain JB197).